The primary structure comprises 873 residues: Alanine--tRNA ligase (873 aa).

Zn(2+)-binding residues include histidine 563, histidine 567, cysteine 664, and histidine 668.

Belongs to the class-II aminoacyl-tRNA synthetase family. Requires Zn(2+) as cofactor.

The protein localises to the cytoplasm. The enzyme catalyses tRNA(Ala) + L-alanine + ATP = L-alanyl-tRNA(Ala) + AMP + diphosphate. Functionally, catalyzes the attachment of alanine to tRNA(Ala) in a two-step reaction: alanine is first activated by ATP to form Ala-AMP and then transferred to the acceptor end of tRNA(Ala). Also edits incorrectly charged Ser-tRNA(Ala) and Gly-tRNA(Ala) via its editing domain. The protein is Alanine--tRNA ligase of Aromatoleum aromaticum (strain DSM 19018 / LMG 30748 / EbN1) (Azoarcus sp. (strain EbN1)).